The primary structure comprises 230 residues: Orotidine 5'-phosphate decarboxylase (230 aa).

Substrate is bound by residues D10, K31, 58–67, T117, R179, Q188, G208, and R209; that span reads DLKLHDIPNT. The active-site Proton donor is K60.

Belongs to the OMP decarboxylase family. Type 1 subfamily. Homodimer.

The catalysed reaction is orotidine 5'-phosphate + H(+) = UMP + CO2. It functions in the pathway pyrimidine metabolism; UMP biosynthesis via de novo pathway; UMP from orotate: step 2/2. Its function is as follows. Catalyzes the decarboxylation of orotidine 5'-monophosphate (OMP) to uridine 5'-monophosphate (UMP). The polypeptide is Orotidine 5'-phosphate decarboxylase (Staphylococcus haemolyticus (strain JCSC1435)).